Consider the following 689-residue polypeptide: MTQQTFLVEIGTEELPPKALRSLAESFAANFTAELDNANLSHGEVSWYAAPRRLAVKVANLSAAQADREVEKRGPAIAQAFDAEGKPSKAAEGWARGCGITVDQAERLVTDKGEWLLYRAHVKGQPAQLLLAGMVNTALSKLPIPKLMRWGDKETQFVRPVHTVTLLLGTEVIPGTVLGINSDRVIRGHRFMGEAEFTIDSADQYPQILLERGKVIADYELRKSIIKRDAEQAAQQIGGVADLSESLLEEVASLVEWPVVLTAKFEEKFLAVPAEALVYTMKGDQKYFPVYDTAGHLMPHFIFVANIESKDPQQIISGNEKVVRPRLADAEFFFKTDRKKRLEDNLPRLETVLFQQQLGTLRDKTDRIQALAGWVAAQIGADVNHATRAGLLSKCDLMTNMVFEFTDTQGVMGMHYARHDGEAEDVAVALNEQYQPRFAGDDLPSNPVACALAIADKMDTLAGIFGIGQHPKGDKDPFALRRAALGVLRIIVEKNLSLDLQTLTEEAVRLYGSKLTNAKVVDDVIEFMLGRFRAWYQDEGHSVDTIQAVLARRPTKPADFDARVKAVTYFRTLDAAAALAAANKRVSNILAKSTDTLNDHVHASILKEPAELKLATHLVVLRDQLEPVFAAGQYKEALVELAALRETVDEFFESVMVMAEDDAVRVNRLTLLSKLRELFLQVADISLLQ.

This sequence belongs to the class-II aminoacyl-tRNA synthetase family. As to quaternary structure, tetramer of two alpha and two beta subunits.

It is found in the cytoplasm. It catalyses the reaction tRNA(Gly) + glycine + ATP = glycyl-tRNA(Gly) + AMP + diphosphate. This is Glycine--tRNA ligase beta subunit from Yersinia pseudotuberculosis serotype O:1b (strain IP 31758).